The chain runs to 321 residues: Phospho-N-acetylmuramoyl-pentapeptide-transferase (321 aa).

The next 10 helical transmembrane spans lie at 6–26 (ALIP…LFIG), 50–70 (GTPT…GIWV), 82–102 (LFIL…DDFI), 118–138 (LLGQ…EGYP), 143–163 (FFGI…FWLV), 175–195 (IDGL…IIAW), 200–220 (YDVL…FAYN), 226–246 (IFMG…ISIM), 251–271 (WTLL…MLQV), and 301–321 (IDII…WFIW).

It belongs to the glycosyltransferase 4 family. MraY subfamily. Requires Mg(2+) as cofactor.

Its subcellular location is the cell membrane. It carries out the reaction UDP-N-acetyl-alpha-D-muramoyl-L-alanyl-gamma-D-glutamyl-L-lysyl-D-alanyl-D-alanine + di-trans,octa-cis-undecaprenyl phosphate = Mur2Ac(oyl-L-Ala-gamma-D-Glu-L-Lys-D-Ala-D-Ala)-di-trans,octa-cis-undecaprenyl diphosphate + UMP. It functions in the pathway cell wall biogenesis; peptidoglycan biosynthesis. Functionally, catalyzes the initial step of the lipid cycle reactions in the biosynthesis of the cell wall peptidoglycan: transfers peptidoglycan precursor phospho-MurNAc-pentapeptide from UDP-MurNAc-pentapeptide onto the lipid carrier undecaprenyl phosphate, yielding undecaprenyl-pyrophosphoryl-MurNAc-pentapeptide, known as lipid I. The sequence is that of Phospho-N-acetylmuramoyl-pentapeptide-transferase from Enterococcus hirae.